Reading from the N-terminus, the 490-residue chain is Argininosuccinate lyase (490 aa).

It belongs to the lyase 1 family. Argininosuccinate lyase subfamily.

Its subcellular location is the cytoplasm. It carries out the reaction 2-(N(omega)-L-arginino)succinate = fumarate + L-arginine. It participates in amino-acid biosynthesis; L-arginine biosynthesis; L-arginine from L-ornithine and carbamoyl phosphate: step 3/3. The chain is Argininosuccinate lyase from Bifidobacterium longum (strain DJO10A).